The primary structure comprises 484 residues: Glutamyl-tRNA(Gln) amidotransferase subunit A (484 aa).

Active-site charge relay system residues include lysine 77 and serine 152. Residue serine 176 is the Acyl-ester intermediate of the active site.

It belongs to the amidase family. GatA subfamily. As to quaternary structure, heterotrimer of A, B and C subunits.

The enzyme catalyses L-glutamyl-tRNA(Gln) + L-glutamine + ATP + H2O = L-glutaminyl-tRNA(Gln) + L-glutamate + ADP + phosphate + H(+). In terms of biological role, allows the formation of correctly charged Gln-tRNA(Gln) through the transamidation of misacylated Glu-tRNA(Gln) in organisms which lack glutaminyl-tRNA synthetase. The reaction takes place in the presence of glutamine and ATP through an activated gamma-phospho-Glu-tRNA(Gln). The polypeptide is Glutamyl-tRNA(Gln) amidotransferase subunit A (Lacticaseibacillus paracasei (strain ATCC 334 / BCRC 17002 / CCUG 31169 / CIP 107868 / KCTC 3260 / NRRL B-441) (Lactobacillus paracasei)).